A 331-amino-acid chain; its full sequence is Nucleotide-binding protein SGR_5570 (331 aa).

Residues Met1–Gly43 are disordered. Gly55 to Ser62 is a binding site for ATP. Asp106 to Gly109 provides a ligand contact to GTP.

This sequence belongs to the RapZ-like family.

Functionally, displays ATPase and GTPase activities. The sequence is that of Nucleotide-binding protein SGR_5570 from Streptomyces griseus subsp. griseus (strain JCM 4626 / CBS 651.72 / NBRC 13350 / KCC S-0626 / ISP 5235).